The sequence spans 75 residues: Kappa-scoloptoxin(03)-Ssm1e (75 aa).

A signal peptide spans 1–23; sequence MKSSMAILLVMALIIFTLDKNYS.

It belongs to the scoloptoxin-03 family. Post-translationally, contains 3 disulfide bonds. Expressed by the venom gland.

The protein resides in the secreted. Inhibits voltage-gated potassium channels. The protein is Kappa-scoloptoxin(03)-Ssm1e of Scolopendra mutilans (Chinese red-headed centipede).